The following is a 75-amino-acid chain: Small ribosomal subunit protein bS18 (75 aa).

It belongs to the bacterial ribosomal protein bS18 family. As to quaternary structure, part of the 30S ribosomal subunit. Forms a tight heterodimer with protein bS6.

In terms of biological role, binds as a heterodimer with protein bS6 to the central domain of the 16S rRNA, where it helps stabilize the platform of the 30S subunit. This chain is Small ribosomal subunit protein bS18, found in Paracoccus denitrificans (strain Pd 1222).